The chain runs to 433 residues: Urokinase-type plasminogen activator (433 aa).

The first 20 residues, 1-20, serve as a signal peptide directing secretion; it reads MKVWLASLFLCALVVKNSEG. An EGF-like domain is found at 28–64; sequence DESNCGCQNGGVCVSYKYFSRIRRCSCPRKFQGEHCE. Cystine bridges form between Cys32-Cys40, Cys34-Cys52, Cys54-Cys63, Cys71-Cys152, Cys92-Cys134, and Cys123-Cys147. Residues 35 to 58 form a binds urokinase plasminogen activator surface receptor region; the sequence is QNGGVCVSYKYFSRIRRCSCPRKF. The 82-residue stretch at 71-152 folds into the Kringle domain; sequence CYHGNGDSYR…FVQECMVHDC (82 aa). The connecting peptide stretch occupies residues 153 to 179; it reads SLSKKPSSSVDQQGFQCGQKALRPRFK. Phosphoserine is present on Ser159. 6 disulfide bridges follow: Cys169-Cys301, Cys211-Cys227, Cys219-Cys290, Cys315-Cys384, Cys347-Cys363, and Cys374-Cys402. In terms of domain architecture, Peptidase S1 spans 180–426; the sequence is IVGGEFTEVE…FLDWIQSHIG (247 aa). Residues His226 and Asp277 each act as charge relay system in the active site. The active-site Charge relay system is Ser378.

The protein belongs to the peptidase S1 family. Found in high and low molecular mass forms. Each consists of two chains, A and B. The high molecular mass form contains a long chain A which is cleaved to yield a short chain A. Forms heterodimer with SERPINA5. Binds LRP1B; binding is followed by internalization and degradation. Interacts with MRC2. Interacts with PLAUR. In complex with SERPINE1, interacts with PLAUR/uPAR. Interacts with SORL1 and LRP1, either alone or in complex with SERPINE1; these interactions are abolished in the presence of LRPAP1/RAP. The ternary complex composed of PLAUR-PLAU-PAI1 also interacts with SORLA. Post-translationally, produced as an inactive single-chain protein (pro-uPA or sc-uPA), is processed into the active disulfide-linked two-chain form of PLAU/uPA by a proteolytic event mediated, at least, by TMPRSS4.

The protein localises to the secreted. The catalysed reaction is Specific cleavage of Arg-|-Val bond in plasminogen to form plasmin.. With respect to regulation, inhibited by SERPINA5. Inhibited by SERPINE1. In terms of biological role, specifically cleaves the zymogen plasminogen to form the active enzyme plasmin. This Mus musculus (Mouse) protein is Urokinase-type plasminogen activator (Plau).